A 1480-amino-acid chain; its full sequence is DNA polymerase zeta catalytic subunit (1480 aa).

Residues Asp403–Leu488 form a disordered region. Polar residues predominate over residues Pro411–Gln427. Basic and acidic residues predominate over residues Thr457 to Pro468. Residues Arg470 to Gly479 show a composition bias toward polar residues. Positions 1381, 1384, 1400, and 1403 each coordinate Zn(2+). The segment at Cys1381–Cys1403 adopts a CysA-type zinc-finger fold. Cys1432, Cys1435, Cys1446, and Cys1451 together coordinate [4Fe-4S] cluster. The short motif at Cys1432 to Cys1451 is the CysB motif element.

It belongs to the DNA polymerase type-B family. Forms DNA polymerase zeta with rev7. [4Fe-4S] cluster is required as a cofactor.

It localises to the mitochondrion. It is found in the nucleus. The catalysed reaction is DNA(n) + a 2'-deoxyribonucleoside 5'-triphosphate = DNA(n+1) + diphosphate. Nonessential DNA polymerase. Required for DNA damage induced mutagenesis. Involved in DNA repair, mitochondrial DNA repair and translesion synthesis. Has a role in the bypass of abasic (AP) sites. This Schizosaccharomyces pombe (strain 972 / ATCC 24843) (Fission yeast) protein is DNA polymerase zeta catalytic subunit (rev3).